Here is a 105-residue protein sequence, read N- to C-terminus: Large ribosomal subunit protein bL21 (105 aa).

It belongs to the bacterial ribosomal protein bL21 family. Part of the 50S ribosomal subunit. Contacts protein L20.

Functionally, this protein binds to 23S rRNA in the presence of protein L20. The chain is Large ribosomal subunit protein bL21 from Stenotrophomonas maltophilia (strain R551-3).